The primary structure comprises 125 residues: Holo-[acyl-carrier-protein] synthase (125 aa).

Mg(2+) contacts are provided by D8 and E57.

Belongs to the P-Pant transferase superfamily. AcpS family. Mg(2+) serves as cofactor.

It localises to the cytoplasm. It catalyses the reaction apo-[ACP] + CoA = holo-[ACP] + adenosine 3',5'-bisphosphate + H(+). Transfers the 4'-phosphopantetheine moiety from coenzyme A to a Ser of acyl-carrier-protein. The sequence is that of Holo-[acyl-carrier-protein] synthase from Azoarcus sp. (strain BH72).